Consider the following 132-residue polypeptide: Small ribosomal subunit protein uS8 (132 aa).

This sequence belongs to the universal ribosomal protein uS8 family. Part of the 30S ribosomal subunit. Contacts proteins S5 and S12.

In terms of biological role, one of the primary rRNA binding proteins, it binds directly to 16S rRNA central domain where it helps coordinate assembly of the platform of the 30S subunit. The polypeptide is Small ribosomal subunit protein uS8 (Streptococcus gordonii (strain Challis / ATCC 35105 / BCRC 15272 / CH1 / DL1 / V288)).